A 263-amino-acid chain; its full sequence is tRNA uridine(34) hydroxylase (263 aa).

One can recognise a Rhodanese domain in the interval 129-223 (EGREVVTLDT…YFEETDGAFY (95 aa)). C183 acts as the Cysteine persulfide intermediate in catalysis.

The protein belongs to the TrhO family.

It carries out the reaction uridine(34) in tRNA + AH2 + O2 = 5-hydroxyuridine(34) in tRNA + A + H2O. Catalyzes oxygen-dependent 5-hydroxyuridine (ho5U) modification at position 34 in tRNAs. The protein is tRNA uridine(34) hydroxylase of Delftia acidovorans (strain DSM 14801 / SPH-1).